The following is a 307-amino-acid chain: Ribonuclease H2 subunit B (307 aa).

Ala2 is modified (N-acetylalanine). Lys291 carries the post-translational modification N6-acetyllysine. Ser292 is modified (phosphoserine).

It belongs to the RNase H2 subunit B family. As to quaternary structure, the RNase H2 complex is a heterotrimer composed of the catalytic subunit RNASEH2A and the non-catalytic subunits RNASEH2B and RNASEH2C.

It is found in the nucleus. Non catalytic subunit of RNase H2, an endonuclease that specifically degrades the RNA of RNA:DNA hybrids. Participates in DNA replication, possibly by mediating the removal of lagging-strand Okazaki fragment RNA primers during DNA replication. Mediates the excision of single ribonucleotides from DNA:RNA duplexes. This is Ribonuclease H2 subunit B (Rnaseh2b) from Rattus norvegicus (Rat).